The primary structure comprises 473 residues: Photosystem II CP43 reaction center protein (473 aa).

Positions Met1 to Glu14 are excised as a propeptide. N-acetylthreonine is present on Thr15. Thr15 bears the Phosphothreonine mark. The next 5 membrane-spanning stretches (helical) occupy residues Leu69–Ala93, Leu134–Asn155, Lys178–Thr200, Lys255–Ser275, and Trp291–Ala312. [CaMn4O5] cluster is bound at residue Glu367. Residues Arg447–Pro471 form a helical membrane-spanning segment.

It belongs to the PsbB/PsbC family. PsbC subfamily. As to quaternary structure, PSII is composed of 1 copy each of membrane proteins PsbA, PsbB, PsbC, PsbD, PsbE, PsbF, PsbH, PsbI, PsbJ, PsbK, PsbL, PsbM, PsbT, PsbX, PsbY, PsbZ, Psb30/Ycf12, at least 3 peripheral proteins of the oxygen-evolving complex and a large number of cofactors. It forms dimeric complexes. The cofactor is Binds multiple chlorophylls and provides some of the ligands for the Ca-4Mn-5O cluster of the oxygen-evolving complex. It may also provide a ligand for a Cl- that is required for oxygen evolution. PSII binds additional chlorophylls, carotenoids and specific lipids..

Its subcellular location is the plastid. It localises to the chloroplast thylakoid membrane. One of the components of the core complex of photosystem II (PSII). It binds chlorophyll and helps catalyze the primary light-induced photochemical processes of PSII. PSII is a light-driven water:plastoquinone oxidoreductase, using light energy to abstract electrons from H(2)O, generating O(2) and a proton gradient subsequently used for ATP formation. The chain is Photosystem II CP43 reaction center protein from Arabis hirsuta (Hairy rock-cress).